The sequence spans 689 residues: DNA ligase (689 aa).

NAD(+)-binding positions include 40–44, 89–90, and glutamate 121; these read DAEYD and SL. The N6-AMP-lysine intermediate role is filled by lysine 123. Residues arginine 144, glutamate 179, lysine 295, and lysine 319 each coordinate NAD(+). Zn(2+) contacts are provided by cysteine 413, cysteine 416, cysteine 431, and cysteine 437. The 80-residue stretch at 610-689 folds into the BRCT domain; sequence REQSSLTGKI…AEWLTLVRDI (80 aa).

The protein belongs to the NAD-dependent DNA ligase family. LigA subfamily. Requires Mg(2+) as cofactor. The cofactor is Mn(2+).

It catalyses the reaction NAD(+) + (deoxyribonucleotide)n-3'-hydroxyl + 5'-phospho-(deoxyribonucleotide)m = (deoxyribonucleotide)n+m + AMP + beta-nicotinamide D-nucleotide.. Its function is as follows. DNA ligase that catalyzes the formation of phosphodiester linkages between 5'-phosphoryl and 3'-hydroxyl groups in double-stranded DNA using NAD as a coenzyme and as the energy source for the reaction. It is essential for DNA replication and repair of damaged DNA. The protein is DNA ligase of Rickettsia bellii (strain RML369-C).